Reading from the N-terminus, the 300-residue chain is MKILLDLLLLLPLLIVCCLESFVKLFIPKRRKSVAGEIVLITGAGHGIGRLTAYEFAKLKSKLVLWDINKHGLEETAAKCKGLGAKVYTFVVDCSNREDIYSSAKKVKAEIGDVSILVNNAGVVYTSDLFATQDAQIEKTFEVNILAHFWTTKAFLPAMMKNNHGHVVTVASAAGHISVPFLLAYCSSKFSAVGFHKALTDELAALQITGVKTTCLCPNFVNTGFIKNPSTSLGPALEPEEVVNRLMNGILTEQKMIFSPSSIAFLTILERILPERFLAVLKRKINIKFDAVIGYKMKAQ.

An N-terminal signal peptide occupies residues 1–18; sequence MKILLDLLLLLPLLIVCC. 40–67 is an NADP(+) binding site; sequence LITGAGHGIGRLTAYEFAKLKSKLVLWD. Ser-172 is a binding site for substrate. Tyr-185 serves as the catalytic Proton acceptor. Lys-189 is an NADP(+) binding site.

Belongs to the short-chain dehydrogenases/reductases (SDR) family. 17-beta-HSD 3 subfamily.

The protein resides in the endoplasmic reticulum. Its subcellular location is the lipid droplet. It carries out the reaction 17beta-estradiol + NAD(+) = estrone + NADH + H(+). It catalyses the reaction 17beta-estradiol + NADP(+) = estrone + NADPH + H(+). Can convert androstan-3-alpha,17-beta-diol (3-alpha-diol) to androsterone in vitro, suggesting that it may participate in androgen metabolism during steroidogenesis. May act by metabolizing compounds that stimulate steroid synthesis and/or by generating metabolites that inhibit it. Has no activity toward DHEA (dehydroepiandrosterone), or A-dione (4-androste-3,17-dione), and only a slight activity toward testosterone to A-dione. The sequence is that of Estradiol 17-beta-dehydrogenase 11 (HSD17B11) from Macaca fascicularis (Crab-eating macaque).